We begin with the raw amino-acid sequence, 293 residues long: ATP synthase gamma chain (293 aa).

It belongs to the ATPase gamma chain family. As to quaternary structure, F-type ATPases have 2 components, CF(1) - the catalytic core - and CF(0) - the membrane proton channel. CF(1) has five subunits: alpha(3), beta(3), gamma(1), delta(1), epsilon(1). CF(0) has three main subunits: a, b and c.

The protein localises to the cell membrane. Its function is as follows. Produces ATP from ADP in the presence of a proton gradient across the membrane. The gamma chain is believed to be important in regulating ATPase activity and the flow of protons through the CF(0) complex. In Streptococcus gordonii (strain Challis / ATCC 35105 / BCRC 15272 / CH1 / DL1 / V288), this protein is ATP synthase gamma chain.